The primary structure comprises 444 residues: Maltoporin (444 aa).

The N-terminal stretch at 1-24 is a signal peptide; the sequence is MITLRKVPLALAIAAGILSAQAGA.

This sequence belongs to the porin LamB (TC 1.B.3) family. In terms of assembly, homotrimer formed of three 18-stranded antiparallel beta-barrels, containing three independent channels.

Its subcellular location is the cell outer membrane. It catalyses the reaction beta-maltose(in) = beta-maltose(out). In terms of biological role, involved in the transport of maltose and maltodextrins. The sequence is that of Maltoporin from Enterobacter sp. (strain 638).